We begin with the raw amino-acid sequence, 726 residues long: ATP-dependent permease MDL1, mitochondrial (726 aa).

A mitochondrion-targeting transit peptide spans 1-112 (MDPIRFGLSR…LAFLKLCVRH (112 aa)). N-linked (GlcNAc...) asparagine glycans are attached at residues N66, N113, and N132. Transmembrane regions (helical) follow at residues 158-178 (FFIAGSLLLVSSGVTMSIPYI), 196-216 (IMGIPSGTFYIGLLGLFFLGS), 306-326 (GYMSLIVPPIALGAFFYGEYV), 386-406 (GIFFGSTGFLGNATVIAILAL), and 423-443 (SFLLYTVYAGGSIVGLSGCFT). The ABC transmembrane type-1 domain maps to 158 to 447 (FFIAGSLLLV…LSGCFTDIMK (290 aa)). The 238-residue stretch at 482 to 719 (LSFRNVGFAY…GTNFYKLMRW (238 aa)) folds into the ABC transporter domain. A glycan (N-linked (GlcNAc...) asparagine) is linked at N502. 517–524 (APSGGGKS) is an ATP binding site. N-linked (GlcNAc...) asparagine glycosylation is found at N584, N598, and N668.

This sequence belongs to the ABC transporter superfamily. ABCB family. Mitochondrial peptide exporter (TC 3.A.1.212) subfamily.

Its subcellular location is the mitochondrion inner membrane. Functionally, mediates export of peptides generated upon proteolysis of mitochondrial inner membrane proteins. The sequence is that of ATP-dependent permease MDL1, mitochondrial (mdl1) from Schizosaccharomyces pombe (strain 972 / ATCC 24843) (Fission yeast).